We begin with the raw amino-acid sequence, 7096 residues long: Replicase polyprotein 1ab (7096 aa).

Residues 1–147 (MESLVPGFNE…ADLKSFDLGD (147 aa)) are disordered. Residues 1–2225 (MESLVPGFNE…NYLKSPNFSK (2225 aa)) lie on the Cytoplasmic side of the membrane. The CoV Nsp1 globular domain occupies 12-127 (THVQLSLPVL…YRKVLLRKNG (116 aa)). The BetaCoV Nsp1 C-terminal domain maps to 148–179 (ELGTDPYEDFQENWNTKHSSGVTRELMRELNG). The binding to 40s ribosome mRNA entry channel stretch occupies residues 154–180 (YEDFQENWNTKHSSGVTRELMRELNGG). The CoV Nsp2 N-terminal domain maps to 183 to 456 (TRYVDNNFCG…NDNLLEILQK (274 aa)). Zn(2+) is bound by residues cysteine 200, cysteine 231, histidine 234, histidine 236, cysteine 323, cysteine 326, cysteine 341, cysteine 344, cysteine 370, cysteine 373, histidine 382, and cysteine 416. Positions 200–236 (CIKDLLARAGKASCTLSEQLDFIDTKRGVYCCREHEH) are C2H2. Positions 323–344 (CDHCGETSWQTGDFVKATCEFC) are C4. Positions 370 to 416 (CPACHNSEVGPEHSLAEYHNESGLKTILRKGGRTIAFGGCVFSYVGC) are C2HC. The CoV Nsp2 middle domain maps to 458-688 (KVNINIVGDF…FKLVNKFLAL (231 aa)). LRR repeat units lie at residues 545–569 (RSIF…AITI) and 697–719 (GAKL…LYRK). The region spanning 690–818 (ADSIIIGGAK…TNNTFTLKGG (129 aa)) is the CoV Nsp2 C-terminal domain. In terms of domain architecture, Ubiquitin-like 1 spans 821–929 (TKVTFGDDTV…MYCSFYPPDE (109 aa)). The segment at 926–999 (PPDEDEEEGD…QQDGSEDNQT (74 aa)) is disordered. 2 stretches are compositionally biased toward acidic residues: residues 927–942 (PDED…EEFE) and 971–984 (PEEE…DDDS). Macro domains are found at residues 1025 to 1194 (VNSF…LEMK), 1231 to 1359 (KIKA…LPSI), and 1367 to 1494 (ILGT…TSSS). In terms of domain architecture, DPUP spans 1496–1561 (TPEEHFIETI…TFDNLKTLLS (66 aa)). The region spanning 1565–1620 (VRTIKVFTTVDNINLHTQVVDMSMTYGQQFGPTYLDGADVTKIKPHNSHEGKTFYV) is the Ubiquitin-like 2 domain. In terms of domain architecture, Peptidase C16 spans 1634–1898 (YYHTTDPSFL…CTEIDPKLDN (265 aa)). The active-site For PL-PRO activity is cysteine 1674. An LRR 3 repeat occupies 1680-1702 (LLTLQQIELKFNPPALQDAYYRA). The Zn(2+) site is built by cysteine 1752, cysteine 1755, cysteine 1787, and cysteine 1789. The segment at 1752–1789 (CKTCGQQQTTLKGVEAVMYMGTLSYEQFKKGVQIPCTC) adopts a C4-type zinc-finger fold. Catalysis depends on for PL-PRO activity residues histidine 1835 and aspartate 1849. One can recognise a Nucleic acid-binding domain in the interval 1911 to 2021 (PIDLVPNQPY…CLWSTKPVET (111 aa)). Positions 2046–2155 (PVSEEVVENP…LNKVVSTTTN (110 aa)) constitute a G2M domain. Residues 2226 to 2246 (LINIIIWFLLLSVCLGSLIYS) traverse the membrane as a helical segment. Topologically, residues 2247–2317 (TAALGVLMSN…QITISSFKWD (71 aa)) are lumenal. The 3Ecto domain occupies 2247-2317 (TAALGVLMSN…QITISSFKWD (71 aa)). Disulfide bonds link cysteine 2263/cysteine 2291 and cysteine 2282/cysteine 2288. Residues 2318–2338 (LTAFGLVAEWFLAYILFTRFF) form a helical membrane-spanning segment. Residues 2339-2775 (YVLGLAAIMQ…VNNWLKQLIK (437 aa)) are Cytoplasmic-facing. A Y1 region spans residues 2395-2485 (KSYVHVVDGC…QFKRPINPTD (91 aa)). Residues 2395–2763 (KSYVHVVDGC…VTTKIALKGG (369 aa)) form the CoV Nsp3 Y domain. Zn(2+) is bound by residues histidine 2399, cysteine 2404, cysteine 2409, cysteine 2412, cysteine 2445, histidine 2448, cysteine 2452, and cysteine 2455. Residues 2399–2412 (HVVDGCNSSTCMMC) form a ZF1 region. Residues 2445-2455 (CKLHNWNCVNC) are ZF2. Residues 2486-2580 (QSSYIVDSVT…LLDQALVSDV (95 aa)) are Y2. Residues 2486-2763 (QSSYIVDSVT…VTTKIALKGG (278 aa)) are coV-Y. The Y3 stretch occupies residues 2581–2662 (GDSAEVAVKM…ECLKLSHQSD (82 aa)). The Y4 stretch occupies residues 2663-2763 (IEVTGDSCNN…VTTKIALKGG (101 aa)). A helical transmembrane segment spans residues 2776-2796 (VTLVFLFVAAIFYLITPVHVM). The Lumenal portion of the chain corresponds to 2797 to 3044 (SKHTDFSSEI…IQPIGALDIS (248 aa)). The chain crosses the membrane as a helical span at residues 3045-3065 (ASIVAGGIVAIVVTCLAYYFM). The Cytoplasmic portion of the chain corresponds to 3066 to 3099 (RFRRAFGEYSHVVAFNTLLFLMSFTVLCLTPVYS). A helical membrane pass occupies residues 3100–3120 (FLPGVYSVIYLYLTFYLTNDV). Over 3121–3127 (SFLAHIQ) the chain is Lumenal. The helical transmembrane segment at 3128–3148 (WMVMFTPLVPFWITIAYIICI) threads the bilayer. Residues 3149-3586 (STKHFYWFFS…KGTHHWLLLT (438 aa)) are Cytoplasmic-facing. One can recognise a Nsp4C domain in the interval 3165 to 3263 (VVFNGVSFST…QTSITSAVLQ (99 aa)). The LRR 4 repeat unit spans residues 3185–3206 (LNKEMYLKLRSDVLLPLTQYNR). Residues 3264-3569 (SGFRKMAFPS…VRQCSGVTFQ (306 aa)) form the Peptidase C30 domain. Lysine 3268 participates in a covalent cross-link: Glycyl lysine isopeptide (Lys-Gly) (interchain with G-Cter in ubiquitin). Catalysis depends on histidine 3304, which acts as the For 3CL-PRO activity. Lysine 3353 participates in a covalent cross-link: Glycyl lysine isopeptide (Lys-Gly) (interchain with G-Cter in ubiquitin). Cysteine 3408 serves as the catalytic Nucleophile; for 3CL-PRO activity. The helical transmembrane segment at 3587–3607 (ILTSLLVLVQSTQWSLFFFLY) threads the bilayer. Position 3608 (glutamate 3608) is a topological domain, lumenal. Residues 3609 to 3629 (NAFLPFAMGIIAMSAFAMMFV) form a helical membrane-spanning segment. Residues 3630–3634 (KHKHA) lie on the Cytoplasmic side of the membrane. The chain crosses the membrane as a helical span at residues 3635 to 3655 (FLCLFLLPSLATVAYFNMVYM). At 3656 to 3673 (PASWVMRIMTWLDMVDTS) the chain is on the lumenal side. A helical membrane pass occupies residues 3674-3694 (LSGFKLKDCVMYASAVVLLIL). Topologically, residues 3695–3729 (MTARTVYDDGARRVWTLMNVLTLVYKVYYGNALDQ) are cytoplasmic. Residues 3730-3750 (AISMWALIISVTSNYSGVVTT) traverse the membrane as a helical segment. Residues 3751 to 3778 (VMFLARGIVFMCVEYCPIFFITGNTLQC) are Lumenal-facing. The helical transmembrane segment at 3779–3799 (IMLVYCFLGYFCTCYFGLFCL) threads the bilayer. Topologically, residues 3800–7096 (LNRYFRLTLG…VISSDVLVNN (3297 aa)) are cytoplasmic. The RdRp Nsp7 cofactor domain maps to 3860 to 3942 (SKMSDVKCTS…EMLDNRATLQ (83 aa)). Positions 3931–4020 (CEEMLDNRAT…QMYKQARSED (90 aa)) are disordered. 2 LRR repeats span residues 3935–3959 (LDNR…AFAT) and 3977–4004 (LKKL…LEKM). The RdRp Nsp8 cofactor domain maps to 3943-4140 (AIASEFSSLP…LRANSAVKLQ (198 aa)). The region spanning 4141–4253 (NNELSPVALR…GSLAATVRLQ (113 aa)) is the Nsp9 ssRNA-binding domain. The ExoN/MTase coactivator domain maps to 4254 to 4392 (AGNATEVPAN…CDQLREPMLQ (139 aa)). Zn(2+)-binding residues include cysteine 4327, cysteine 4330, histidine 4336, cysteine 4343, cysteine 4370, cysteine 4373, cysteine 4381, and cysteine 4383. The NiRAN domain maps to 4399–4653 (FLNRVCGVSA…TAESHVDTDL (255 aa)). The LRR 7 repeat unit spans residues 4591-4616 (AGIVGVLTLDNQDLNGNWYDFGDFIQ). Mn(2+) contacts are provided by asparagine 4601 and aspartate 4610. The Nsp12 Interface domain occupies 4658–4756 (IKWDLLKYDF…HNQDVNLHSS (99 aa)). Residues histidine 4687, cysteine 4693, cysteine 4698, cysteine 4702, and cysteine 4879 each coordinate Zn(2+). The region spanning 4757–5324 (RLSFKELLVY…AMYTPHTVLQ (568 aa)) is the Nsp12 RNA-dependent RNA polymerase domain. A rdRp Fingers N-ter region spans residues 4759–4973 (SFKELLVYAA…HQKLLKSIAA (215 aa)). Residues 4937–4947 (KYAISAKNRAR) are interaction with RMP Remdesivir. Positions 4974–5012 (TRGATVVIGTSKFYGGWHNMLKTVYSDVENPHLMGWDYP) are rdRp Palm N-ter. The RdRp catalytic domain occupies 5004–5166 (PHLMGWDYPK…CFNSTYASQG (163 aa)). The rdRp Fingers C-ter stretch occupies residues 5013 to 5071 (KCDRAMPNMLRIMASLVLARKHTTCCSLSHRFYRLANECAQVLSEMVMCGGSLYVKPGG). 3 residues coordinate Zn(2+): histidine 5034, cysteine 5037, and cysteine 5038. The rdRp Palm C-ter stretch occupies residues 5072-5207 (TSSGDATTAY…TKGPHEFCSQ (136 aa)). Catalysis depends on residues serine 5151, aspartate 5152, and aspartate 5153. The tract at residues 5208–5324 (HTMLVKQGDD…AMYTPHTVLQ (117 aa)) is rdRp Thumb. The region spanning 5325–5437 (AVGACVLCNS…TDFNAIATCD (113 aa)) is the CV ZBD domain. Residues cysteine 5329, cysteine 5332, cysteine 5340, cysteine 5343, cysteine 5350, cysteine 5353, histidine 5357, histidine 5363, cysteine 5374, cysteine 5379, cysteine 5396, and histidine 5399 each contribute to the Zn(2+) site. An LRR 8 repeat occupies 5552–5572 (TSHTVMPLSAPTLVPQEHYVR). The (+)RNA virus helicase ATP-binding domain occupies 5581–5762 (NISDEFSSNV…MKTIGPDMFL (182 aa)). Residue 5606 to 5613 (GPPGTGKS) coordinates a ribonucleoside 5'-triphosphate. The (+)RNA virus helicase C-terminal domain occupies 5763 to 5932 (GTCRRCPAEI…TLQAENVTGL (170 aa)). An ExoN domain is found at 5997–6212 (MFITREEAIR…RCLAVHECFV (216 aa)). Residues aspartate 6015, glutamate 6017, and glutamate 6116 contribute to the active site. Mg(2+) contacts are provided by aspartate 6015, glutamate 6017, and glutamate 6116. Zn(2+)-binding residues include cysteine 6132, cysteine 6135, cysteine 6151, histidine 6154, histidine 6182, cysteine 6186, and histidine 6189. Residues histidine 6193 and aspartate 6198 contribute to the active site. The Mg(2+) site is built by histidine 6193 and aspartate 6198. Cysteine 6204 is a binding site for Zn(2+). The N7-MTase domain occupies 6221 to 6452 (YPIIGDELKI…NLWNTFTRLQ (232 aa)). S-adenosyl-L-methionine is bound at residue 6256 to 6262 (DIGNPKA). The gpppA-binding stretch occupies residues 6339-6353 (CDGGSLYVNKHAFHT). The Zn(2+) site is built by cysteine 6377, cysteine 6402, cysteine 6409, and histidine 6412. A Nsp15 N-terminal oligomerization domain is found at 6453 to 6513 (SLENVAFNVV…NVAFELWAKR (61 aa)). In terms of domain architecture, AV-Nsp11N/CoV-Nsp15M spans 6514 to 6639 (NIKPVPEVKI…YYKKVDGVVQ (126 aa)). A NendoU domain is found at 6656–6795 (KPRSQMEIDF…KDGHVETFYP (140 aa)). Histidine 6686 serves as the catalytic Proton donor; for uridylate-specific endoribonuclease nsp15 activity. Residue histidine 6701 is the Proton acceptor; for uridylate-specific endoribonuclease nsp15 activity of the active site. Lysine 6741 functions as the For uridylate-specific endoribonuclease nsp15 activity in the catalytic mechanism. Uracil-binding positions include 6741 to 6745 (KCVCS) and 6792 to 6796 (TFYPK). The Nidovirus-type SAM-dependent 2'-O-MTase domain maps to 6800 to 7094 (SQAWQPGVAM…RVVISSDVLV (295 aa)). One copy of the LRR 9 repeat lies at 6817-6841 (RMLLEKCDLQNYGDSATLPKGIMMN). Residues lysine 6844, aspartate 6928, lysine 6968, and glutamate 7001 contribute to the active site.

The protein belongs to the coronaviruses polyprotein 1ab family. In terms of assembly, interacts with host GIGYF2. May form homohexamers. Interacts with N protein. As to quaternary structure, 3CL-PRO exists as monomer and homodimer. Only the homodimer shows catalytic activity. Interacts with host FBXO22; this interaction promotes the proteasomal degradation of nsp5. In terms of assembly, interacts with PL-PRO and nsp6. Forms homodimers. Interacts with host ZFYVE1 (DFCP1), which leads to ER and DMVs binding to lipid droplets. Interacts with host TBK1; this interaction decreases IRF3 phosphorylation by 57%, which leads to reduced IFN-beta production. As to quaternary structure, interacts with nsp8 and nsp12 to form the replication-transcription complex (RTC): nsp12, nsp7, two subunits of nsp8, and up to two subunits of nsp13. Eight copies of nsp7 and eight copies of nsp8 assemble to form a heterohexadecamer dsRNA-encircling ring structure. In terms of assembly, interacts with nsp7, nsp13 and nsp12 to form the replication-transcription complex (RTC): nsp12, nsp7, two subunits of nsp8, and up to two subunits of nsp13. Eight copies of nsp7 and eight copies of nsp8 assemble to form a heterohexadecamer dsRNA-encircling ring structure. Is a dimer. Interacts with NSP12. Interacts with host SND1. As to quaternary structure, forms a dodecamer and interacts with nsp14 and nsp16; these interactions enhance nsp14 and nsp16 enzymatic activities. In terms of assembly, interacts with nsp7 and nsp8 to form the replication-transcription complex (RTC): nsp12, nsp7, two subunits of nsp8, and up to two subunits of nsp13. Interacts with nsp9. Interacts with nsp8 to form the replication-transcription complex (RTC): nsp12, nsp7, two subunits of nsp8, and up to two subunits of nsp13. Interacts with host TBK1; this interaction inhibits TBK1 phosphorylation and decreases by 75% IRF3 phosphorylation, which leads to reduced IFN-beta production. As to quaternary structure, interacts (via N-terminus) with DDX1. Interacts with nsp10. In terms of assembly, homohexamer. Interacts with nsp10. The cofactor is Mn(2+). Requires Mg(2+) as cofactor. Post-translationally, specific enzymatic cleavages in vivo by its own proteases yield mature proteins. 3CL-PRO and PL-PRO proteinases are autocatalytically processed.

It is found in the host cytoplasm. The protein resides in the host endosome. It localises to the host endoplasmic reticulum membrane. Its subcellular location is the host Golgi apparatus. The protein localises to the host nucleus. It is found in the host perinuclear region. The protein resides in the host endoplasmic reticulum. It localises to the host endoplasmic reticulum-Golgi intermediate compartment. It catalyses the reaction RNA(n) + a ribonucleoside 5'-triphosphate = RNA(n+1) + diphosphate. The catalysed reaction is ATP + H2O = ADP + phosphate + H(+). It carries out the reaction TSAVLQ-|-SGFRK-NH2 and SGVTFQ-|-GKFKK the two peptides corresponding to the two self-cleavage sites of the SARS 3C-like proteinase are the two most reactive peptide substrates. The enzyme exhibits a strong preference for substrates containing Gln at P1 position and Leu at P2 position.. The enzyme catalyses Thiol-dependent hydrolysis of ester, thioester, amide, peptide and isopeptide bonds formed by the C-terminal Gly of ubiquitin (a 76-residue protein attached to proteins as an intracellular targeting signal).. It catalyses the reaction a 5'-end (N(7)-methyl 5'-triphosphoguanosine)-ribonucleoside in mRNA + S-adenosyl-L-methionine = a 5'-end (N(7)-methyl 5'-triphosphoguanosine)-(2'-O-methyl-ribonucleoside) in mRNA + S-adenosyl-L-homocysteine + H(+). The catalysed reaction is uridylyl-uridylyl-ribonucleotide-RNA = a 3'-end uridylyl-2',3'-cyclophospho-uridine-RNA + a 5'-end dephospho-ribonucleoside-RNA. It carries out the reaction a 5'-end diphospho-ribonucleoside in mRNA + GTP + H(+) = a 5'-end (5'-triphosphoguanosine)-ribonucleoside in mRNA + diphosphate. The enzyme catalyses a 5'-end (5'-triphosphoguanosine)-ribonucleoside in mRNA + S-adenosyl-L-methionine = a 5'-end (N(7)-methyl 5'-triphosphoguanosine)-ribonucleoside in mRNA + S-adenosyl-L-homocysteine. Inhibited in vitro by GRL-0617. With respect to regulation, inhibited ex vivo by K22. It may shift NSP6 zippering activity towards the nuclear envelope, thereby impairing formation of the NSP6-compartment necessary for viral transcription/replication. Its activity is regulated as follows. Inhibited by Remdesivir antiviral drug (GS-5734). Inhibited by Remdesivir antiviral drug (GS-5734) through non-obligate RNA chain termination. With respect to regulation, inhibited by pyridone-containing alpha-ketoamides compounds 13a and 13b. In turn, alpha-ketoamide 13b (tert-butyl (1-((S)-1-(((S)-4-(benzylamino)-3,4-dioxo-1-((S)-2-oxopyrrolidin-3-yl)butan-2-yl)amino)-3-cyclopropyl-1-oxopropan-2-yl)-2-oxo-1,2-dihydropyridin-3-yl)carbamate) inhibits SARS-CoV-2 replication in human lung cells. Inhibited ex vivo by michael acceptor inhibitor N3. Inhibited ex vivo by compound 11a and 11b. Functionally, multifunctional protein involved in the transcription and replication of viral RNAs. Contains the proteinases responsible for the cleavages of the polyprotein. In terms of biological role, inhibits host translation by associating with the open head conformation of the 40S subunit. The C-terminus binds to and obstructs ribosomal mRNA entry tunnel. Thereby inhibits antiviral response triggered by innate immunity or interferons. The nsp1-40S ribosome complex further induces an endonucleolytic cleavage near the 5'UTR of host mRNAs, targeting them for degradation. This inhibits the integrated stress response (ISR) in the infected cell by preventing EIF2S1/eIF2-alpha phosphorylation upstream of stress granule formation and depletes host G3BP1. Viral mRNAs less susceptible to nsp1-mediated inhibition of translation, because of their 5'-end leader sequence. Enhances mRNA repression of the 4EHP-GYF2 complex in the host, thereby inhibiting the antiviral response and facilitating SARS-CoV-2 replication. Possibly acts in cooperation with nsp1, which induces ribosome stalling on host mRNA, triggering mRNA repression by the host 4EHP-GYF2 complex which is enhanced by nsp2. Its function is as follows. Responsible for the cleavages located at the N-terminus of the replicase polyprotein. Participates together with nsp4 in the assembly of virally-induced cytoplasmic double-membrane vesicles necessary for viral replication. Antagonizes innate immune induction of type I interferon by blocking the phosphorylation, dimerization and subsequent nuclear translocation of host IRF3. Also prevents host NF-kappa-B signaling. In addition, PL-PRO possesses a deubiquitinating/deISGylating activity and processes both 'Lys-48'- and 'Lys-63'-linked polyubiquitin chains from cellular substrates. Cleaves preferentially ISG15 from antiviral protein IFIH1 (MDA5), but not RIGI. Can play a role in host ADP-ribosylation by ADP-ribose. Plays a role in the formation and maintenance of double membrane vesicles (DMVs) replication organelles. DMVs are formed by nsp3 and nsp4, while nsp6 zippers ER membranes and connects to lipid droplets. Functionally, plays a role in the formation and maintenance of double membrane vesicles (DMVs) replication organelles. DMVs are formed by nsp3 and nsp4, while nsp6 zippers ER membranes and connects to lipid droplets. In terms of biological role, cleaves the C-terminus of replicase polyprotein at 11 sites. Recognizes substrates containing the core sequence [ILMVF]-Q-|-[SGACN]. Cleaves and inactivates human TRMT1, preventing tRNA guanine(26)-dimethylation of tRNAs. May cleave human NLRP1 in lung epithelial cells, thereby activating the NLRP1 inflammasome pathway. May cleave human GSDMD, triggering alternative GSDME-mediated epithelial cell death upon activation of the NLRP1 inflammasome, which may enhance the release interleukins 1B, 6, 16 and 18. Also able to bind an ADP-ribose-1''-phosphate (ADRP). Plays a role in the formation and maintenance of double membrane vesicles (DMVs) replication organelles. DMVs are formed by nsp3 and nsp4, while nsp6 zippers ER membranes and connects to lipid droplets. LDs are consumed during DMV formation. Binds to host TBK1 without affecting TBK1 phosphorylation; the interaction with TBK1 decreases IRF3 phosphorylation, which leads to reduced IFN-beta production. Its function is as follows. Plays a role in viral RNA synthesis. Forms a hexadecamer with nsp8 (8 subunits of each) that may participate in viral replication by acting as a primase. Alternatively, may synthesize substantially longer products than oligonucleotide primers. Functionally, plays a role in viral RNA synthesis. Forms a hexadecamer with nsp7 (8 subunits of each) that may participate in viral replication by acting as a primase. Alternatively, may synthesize substantially longer products than oligonucleotide primers. Interacts with ribosome signal recognition particle RNA (SRP). Together with NSP9, suppress protein integration into the cell membrane, thereby disrupting host immune defenses. In terms of biological role, forms a primer, NSP9-pU, which is utilized by the polymerase for the initiation of RNA chains. Interacts with ribosome signal recognition particle RNA (SRP). Together with NSP8, suppress protein integration into the cell membrane, thereby disrupting host immune defenses. Plays a pivotal role in viral transcription by stimulating both nsp14 3'-5' exoribonuclease and nsp16 2'-O-methyltransferase activities. Therefore plays an essential role in viral mRNAs cap methylation. Its function is as follows. RNA-directed RNA polymerase that catalyzes the transcription of viral genomic and subgenomic RNAs. Acts in complex with nsp7 and nsp8 to transcribe both the minus and positive strands of genomic RNA. The kinase-like NiRAN domain of NSP12 attaches one or more nucleotides to the amino terminus of NSP9, forming a covalent RNA-protein intermediate that serves as transcription/replication primer. Subgenomic RNAs (sgRNAs) are formed by discontinuous transcription: The polymerase has the ability to pause at transcription-regulating sequences (TRS) and jump to the leader TRS, resulting in a major deletion. This creates a series of subgenomic RNAs that are replicated, transcribed and translated. In addition, Nsp12 is a subunit of the viral RNA capping enzyme that catalyzes the RNA guanylyltransferase reaction for genomic and sub-genomic RNAs. Subsequently, the NiRAN domain transfers RNA to GDP, and forms the core cap structure GpppA-RNA. Functionally, plays a role in viral RNA synthesis. Multi-functional protein with a zinc-binding domain in N-terminus displaying RNA and DNA duplex-unwinding activities with 5' to 3' polarity. Activity of helicase is dependent on magnesium. Binds to host TBK1 and inhibits TBK1 phosphorylation; the interaction with TBK1 decreases IRF3 phosphorylation, which leads to reduced IFN-beta production. In terms of biological role, plays a role in viral RNA synthesis through two distinct activities. The N7-guanine methyltransferase activity plays a role in the formation of the cap structure GpppA-RNA. The proofreading exoribonuclease reduces the sensitivity of the virus to RNA mutagens during replication. This activity acts on both ssRNA and dsRNA in a 3'-5' direction. Plays a role in viral transcription/replication and prevents the simultaneous activation of host cell dsRNA sensors, such as MDA5/IFIH1, OAS, and PKR. Acts by degrading the 5'-polyuridines generated during replication of the poly(A) region of viral genomic and subgenomic RNAs. Catalyzes a two-step reaction in which a 2'3'-cyclic phosphate (2'3'-cP) is first generated by 2'-O transesterification, which is then hydrolyzed to a 3'-phosphate (3'-P). If not degraded, poly(U) RNA would hybridize with poly(A) RNA tails and activate host dsRNA sensors. May bind genomic dsRNA in association with the replication-transcription complex (RTC), and play a role in nsp12 discontinous transcription. Its function is as follows. Methyltransferase that mediates mRNA cap 2'-O-ribose methylation to the 5'-cap structure of viral mRNAs. N7-methyl guanosine cap is a prerequisite for binding of nsp16. Therefore, it plays an essential role in cap methylation of viral mRNAs, which is essential to evade the immune system, especially when restricted by human IFIT1 and IFIT3. May disrupt host mRNA splicing in nucleus by interacting with pre-mRNA Recognition Domains of the U1 and U2 snRNAs. The chain is Replicase polyprotein 1ab (rep) from Homo sapiens (Human).